A 286-amino-acid chain; its full sequence is Probable glucose uptake protein GlcU (286 aa).

A run of 10 helical transmembrane segments spans residues 4–22, 27–49, 53–72, 85–107, 111–133, 154–176, 181–198, 211–228, 233–255, and 267–284; these read IFLA…LFNV, GPYS…VYIF, VLTP…WALG, VSRT…GVIV, WSTT…GVIL, IVIL…LFNV, ALLP…LLTF, IIPG…FISQ, VATS…ILIL, and IVVG…LGIA.

This sequence belongs to the GRP transporter (TC 2.A.7.5) family.

Its subcellular location is the cell membrane. Functionally, involved in the uptake of glucose. This chain is Probable glucose uptake protein GlcU (glcU), found in Bacillus cereus (strain ATCC 14579 / DSM 31 / CCUG 7414 / JCM 2152 / NBRC 15305 / NCIMB 9373 / NCTC 2599 / NRRL B-3711).